The sequence spans 214 residues: Probable transaldolase (214 aa).

Catalysis depends on Lys83, which acts as the Schiff-base intermediate with substrate.

It belongs to the transaldolase family. Type 3B subfamily.

The protein resides in the cytoplasm. It catalyses the reaction D-sedoheptulose 7-phosphate + D-glyceraldehyde 3-phosphate = D-erythrose 4-phosphate + beta-D-fructose 6-phosphate. The protein operates within carbohydrate degradation; pentose phosphate pathway; D-glyceraldehyde 3-phosphate and beta-D-fructose 6-phosphate from D-ribose 5-phosphate and D-xylulose 5-phosphate (non-oxidative stage): step 2/3. Transaldolase is important for the balance of metabolites in the pentose-phosphate pathway. This chain is Probable transaldolase, found in Streptococcus pyogenes serotype M2 (strain MGAS10270).